The chain runs to 142 residues: Large ribosomal subunit protein uL11 (142 aa).

The protein belongs to the universal ribosomal protein uL11 family. In terms of assembly, part of the ribosomal stalk of the 50S ribosomal subunit. Interacts with L10 and the large rRNA to form the base of the stalk. L10 forms an elongated spine to which L12 dimers bind in a sequential fashion forming a multimeric L10(L12)X complex. One or more lysine residues are methylated.

Forms part of the ribosomal stalk which helps the ribosome interact with GTP-bound translation factors. The protein is Large ribosomal subunit protein uL11 of Leptospira interrogans serogroup Icterohaemorrhagiae serovar copenhageni (strain Fiocruz L1-130).